The sequence spans 1377 residues: ATP-dependent helicase/nuclease subunit A (1377 aa).

Residues 4-478 (TSWTPGQQKV…IDLSKNFRSR (475 aa)) enclose the UvrD-like helicase ATP-binding domain. 25 to 32 (AAAGSGKT) contacts ATP. Residues 526–867 (FLFSDTKTEL…RIMSIHKSKG (342 aa)) enclose the UvrD-like helicase C-terminal domain. Positions 1036 to 1065 (FEEESDEQSDEERSDEERSDGEQSDGEQSD) are enriched in acidic residues. The tract at residues 1036–1072 (FEEESDEQSDEERSDEERSDGEQSDGEQSDGEQPRKD) is disordered.

It belongs to the helicase family. AddA subfamily. In terms of assembly, heterodimer of AddA and AddB/RexB. Requires Mg(2+) as cofactor.

The enzyme catalyses Couples ATP hydrolysis with the unwinding of duplex DNA by translocating in the 3'-5' direction.. The catalysed reaction is ATP + H2O = ADP + phosphate + H(+). Its function is as follows. The heterodimer acts as both an ATP-dependent DNA helicase and an ATP-dependent, dual-direction single-stranded exonuclease. Recognizes the chi site generating a DNA molecule suitable for the initiation of homologous recombination. The AddA nuclease domain is required for chi fragment generation; this subunit has the helicase and 3' -&gt; 5' nuclease activities. This Lachnoclostridium phytofermentans (strain ATCC 700394 / DSM 18823 / ISDg) (Clostridium phytofermentans) protein is ATP-dependent helicase/nuclease subunit A.